The sequence spans 146 residues: Hemoglobin subunit beta-1 (146 aa).

Residue serine 1 is modified to N-acetylserine. The 145-residue stretch at 2–146 (FLSAEEKGLV…VASALAHRYH (145 aa)) folds into the Globin domain. At lysine 17 the chain carries N6-succinyllysine. 2 positions are modified to phosphoserine: serine 44 and serine 50. Lysine 59 carries the N6-succinyllysine modification. Heme b-binding residues include histidine 63 and histidine 92. Asymmetric dimethylarginine is present on arginine 104.

The protein belongs to the globin family. In terms of assembly, heterotetramer of two alpha chains and two beta chains. As to expression, red blood cells.

Functionally, involved in oxygen transport from the lung to the various peripheral tissues. The polypeptide is Hemoglobin subunit beta-1 (HBB1) (Panthera leo (Lion)).